We begin with the raw amino-acid sequence, 276 residues long: CTD small phosphatase-like protein (276 aa).

Residues 1 to 31 (MDGPAIITQVTNPKEDEARSPVAGEKASQRN) form a disordered region. The FCP1 homology domain maps to 102–260 (LDYGKKCVVI…LDLIPFFEGL (159 aa)). Residue Asp112 is the 4-aspartylphosphate intermediate of the active site. Residues Asp112, Asp114, and Asn223 each coordinate Mg(2+). Asp114 functions as the Proton donor in the catalytic mechanism.

In terms of assembly, monomer. Interacts with REST. The cofactor is Mg(2+).

It is found in the nucleus. The catalysed reaction is O-phospho-L-seryl-[protein] + H2O = L-seryl-[protein] + phosphate. It catalyses the reaction O-phospho-L-threonyl-[protein] + H2O = L-threonyl-[protein] + phosphate. Its function is as follows. Preferentially catalyzes the dephosphorylation of 'Ser-5' within the tandem 7 residue repeats in the C-terminal domain (CTD) of the largest RNA polymerase II subunit POLR2A. Negatively regulates RNA polymerase II transcription, possibly by controlling the transition from initiation/capping to processive transcript elongation. Recruited by REST to neuronal genes that contain RE-1 elements, leading to neuronal gene silencing in non-neuronal cells. This Mus musculus (Mouse) protein is CTD small phosphatase-like protein (Ctdspl).